The chain runs to 261 residues: Acyl-[acyl-carrier-protein]--UDP-N-acetylglucosamine O-acyltransferase (261 aa).

The protein belongs to the transferase hexapeptide repeat family. LpxA subfamily. As to quaternary structure, homotrimer.

It is found in the cytoplasm. It carries out the reaction a (3R)-hydroxyacyl-[ACP] + UDP-N-acetyl-alpha-D-glucosamine = a UDP-3-O-[(3R)-3-hydroxyacyl]-N-acetyl-alpha-D-glucosamine + holo-[ACP]. The protein operates within glycolipid biosynthesis; lipid IV(A) biosynthesis; lipid IV(A) from (3R)-3-hydroxytetradecanoyl-[acyl-carrier-protein] and UDP-N-acetyl-alpha-D-glucosamine: step 1/6. In terms of biological role, involved in the biosynthesis of lipid A, a phosphorylated glycolipid that anchors the lipopolysaccharide to the outer membrane of the cell. This is Acyl-[acyl-carrier-protein]--UDP-N-acetylglucosamine O-acyltransferase from Paracoccus denitrificans (strain Pd 1222).